The following is a 327-amino-acid chain: GMP reductase (327 aa).

The Thioimidate intermediate role is filled by C175. Residue 204–227 (IIADGGIRTHGDIAKSVRFGASMV) participates in NADP(+) binding.

The protein belongs to the IMPDH/GMPR family. GuaC type 2 subfamily.

It carries out the reaction IMP + NH4(+) + NADP(+) = GMP + NADPH + 2 H(+). Its function is as follows. Catalyzes the irreversible NADPH-dependent deamination of GMP to IMP. It functions in the conversion of nucleobase, nucleoside and nucleotide derivatives of G to A nucleotides, and in maintaining the intracellular balance of A and G nucleotides. The sequence is that of GMP reductase from Lysinibacillus sphaericus (strain C3-41).